The primary structure comprises 147 residues: MSSIPDYAEQLRTADLRVTRPRVAVLEAVNAHPHADTETIFGAVRFALPDVSRQAVYDVLHALTAAGLVRKIQPSGSVARYESRVGDNHHHIVCRSCGVIADVDCAVGEAPCLTASDHNGFLLDEAEVIYWGLCPDCSISDTSRSHP.

Positions 1–85 are DNA-binding; that stretch reads MSSIPDYAEQ…GSVARYESRV (85 aa). Zn(2+) contacts are provided by His34 and Glu82. The segment at 86-147 is dimerization; sequence GDNHHHIVCR…SISDTSRSHP (62 aa). The Fe cation site is built by Asp87 and His89. The Zn(2+) site is built by His91, Cys94, Cys97, and Asp102. Residue Glu109 participates in Fe cation binding.

This sequence belongs to the Fur family. Homodimer.

The protein resides in the cytoplasm. Represses transcription of the catalase-peroxidase gene katG and its own transcription by binding to the promoter region in a redox-dependent manner. The sequence is that of Transcriptional regulator FurA (furA) from Mycobacterium bovis (strain ATCC BAA-935 / AF2122/97).